We begin with the raw amino-acid sequence, 844 residues long: Protein translocase subunit SecA (844 aa).

ATP is bound by residues Gln-87, 105-109, and Asp-495; that span reads GEGKT. Over residues 783–800 the composition is skewed to basic and acidic residues; that stretch reads QAPPEELKQEFKHKEEPK. The tract at residues 783-844 is disordered; it reads QAPPEELKQE…GQKYKKCCGA (62 aa). Over residues 802–811 the composition is skewed to polar residues; that stretch reads LNYSGAQKET. A compositionally biased stretch (basic and acidic residues) spans 816–826; that stretch reads PERRGEPKVGR. Residues Cys-830, Cys-832, Cys-841, and Cys-842 each coordinate Zn(2+).

Belongs to the SecA family. As to quaternary structure, monomer and homodimer. Part of the essential Sec protein translocation apparatus which comprises SecA, SecYEG and auxiliary proteins SecDF-YajC and YidC. Zn(2+) is required as a cofactor.

Its subcellular location is the cell inner membrane. The protein localises to the cytoplasm. The enzyme catalyses ATP + H2O + cellular proteinSide 1 = ADP + phosphate + cellular proteinSide 2.. Functionally, part of the Sec protein translocase complex. Interacts with the SecYEG preprotein conducting channel. Has a central role in coupling the hydrolysis of ATP to the transfer of proteins into and across the cell membrane, serving as an ATP-driven molecular motor driving the stepwise translocation of polypeptide chains across the membrane. In Nitratidesulfovibrio vulgaris (strain DSM 19637 / Miyazaki F) (Desulfovibrio vulgaris), this protein is Protein translocase subunit SecA.